The sequence spans 87 residues: U3-theraphotoxin-Hhn1c (87 aa).

An N-terminal signal peptide occupies residues 1–24 (MVNMKASMFLTFAGLVLLFVVCHA). A propeptide spanning residues 25 to 52 (SESEEKEFPKEMLSSIFAVDDDFKQEER) is cleaved from the precursor. 3 disulfide bridges follow: Cys54–Cys67, Cys61–Cys72, and Cys66–Cys79.

This sequence belongs to the neurotoxin 10 (Hwtx-1) family. 51 (Hntx-8) subfamily. Hntx-8 sub-subfamily. In terms of tissue distribution, expressed by the venom gland.

It localises to the secreted. Functionally, ion channel inhibitor. In Cyriopagopus hainanus (Chinese bird spider), this protein is U3-theraphotoxin-Hhn1c.